Here is a 435-residue protein sequence, read N- to C-terminus: Manganese transport system membrane protein MntC (435 aa).

The next 9 helical transmembrane spans lie at 17–37 (VLAGTLLLGTASGVLGSFVLL), 42–62 (LIGDAMAHSALPGVCLAFLFT), 68–88 (PFFLLGAALAGLLGTFCIQLI), 98–118 (SAIGIVLSVFFGVGIILLTYI), 143–163 (QDIILIAGISAVLLLLCIVFF), 166–186 (FTLITFDLAFAKGLGIPVRFL), 189–209 (LLACLIVCAVVIGLQTVGVIL), 228–248 (LTGMIIIAGITGGVSGVAGTL), and 255–275 (GMATGPLMILSATLLFLFSMI).

It belongs to the ABC-3 integral membrane protein family. The complex is probably composed of two ATP-binding proteins (MntB), two transmembrane proteins (MntC and MntD) and a solute-binding protein (MntA).

It localises to the cell membrane. In terms of biological role, probably part of the ABC transporter complex MntABCD involved in manganese import. Probably responsible for the translocation of the substrate across the membrane. This is Manganese transport system membrane protein MntC from Bacillus subtilis (strain 168).